The primary structure comprises 413 residues: MFNGKLAQTDPELAKAIELEHQRQQRNIELIASENFVSPAVLEAQGSILTNKYAEGYPGKRYYGGCEFVDIAESLAISRAKKLFGADHANVQPHSGAQANFAVYFALLQPGDKILGMNLAHGGHLTHGSPVNVSGKYFNVVAYGVEEDTGCINYEKLREIALQEKPKMIVAGASAYARAIDFKKIGEIAKEIDAYFFVDMAHIAGLVAAGLHQSPVPYADVVTTTTHKTLRGPRGGMILCKEEYAQLIDKAIFPGSQGGPLMHVIAAKAAAFGEALKPEFKAYQQQIINNAQALAKGLLERGFNLVSGGTDNHLILVDLRGTGITGKQAETLLDEVHITCNKNAIPFDPEKPFVTSGIRLGTPAVTTRGFKEKDMDKVAEIIALTLQEKDNPDTQEKARAMVKELCDKYPLYA.

Residues Leu119 and 123-125 (GHL) each bind (6S)-5,6,7,8-tetrahydrofolate. Position 228 is an N6-(pyridoxal phosphate)lysine (Lys228). Glu243 provides a ligand contact to (6S)-5,6,7,8-tetrahydrofolate.

It belongs to the SHMT family. In terms of assembly, homodimer. Requires pyridoxal 5'-phosphate as cofactor.

It is found in the cytoplasm. It catalyses the reaction (6R)-5,10-methylene-5,6,7,8-tetrahydrofolate + glycine + H2O = (6S)-5,6,7,8-tetrahydrofolate + L-serine. Its pathway is one-carbon metabolism; tetrahydrofolate interconversion. It participates in amino-acid biosynthesis; glycine biosynthesis; glycine from L-serine: step 1/1. In terms of biological role, catalyzes the reversible interconversion of serine and glycine with tetrahydrofolate (THF) serving as the one-carbon carrier. This reaction serves as the major source of one-carbon groups required for the biosynthesis of purines, thymidylate, methionine, and other important biomolecules. Also exhibits THF-independent aldolase activity toward beta-hydroxyamino acids, producing glycine and aldehydes, via a retro-aldol mechanism. In Desulforamulus reducens (strain ATCC BAA-1160 / DSM 100696 / MI-1) (Desulfotomaculum reducens), this protein is Serine hydroxymethyltransferase.